A 20-amino-acid chain; its full sequence is Apidaecin 3+ (20 aa).

Residues 1 to 20 (GKPSRPRPAPIQPRPPHPRL) form a disordered region.

The protein belongs to the apidaecin family.

The protein localises to the secreted. Functionally, antimicrobial peptide active against many Gram-negative enterobacterial and plant-associated bacterial species. Not active against other bacterial species like H.pylori, P.mirabilis, B.pertussis or N.gonorrhoeae. Among others, also active against S.typhi. In terms of biological role, not active against S.typhi. The sequence is that of Apidaecin 3+ from Pimpla disparis (Parasitic wasp).